Reading from the N-terminus, the 382-residue chain is Elloramycin glycosyltransferase ElmGT (382 aa).

It belongs to the glycosyltransferase 28 family.

It catalyses the reaction 8-demethyltetracenomycin C + dTDP-beta-L-rhamnose = 8-demethyl-8-alpha-L-rhamnosyl-tetracenomycin C + dTDP + H(+). The protein operates within antibiotic biosynthesis. In terms of biological role, glycosyltransferase that transfers an L-rhamnose moiety from dTDP-L-rhamnose to the elloramycin aglycone 8-demethyl-tetracenomycin C (8DMTC) in elloramycin biosynthesis, an antitumor polyketide. Possesses donor substrate flexibility: able to transfer at least 11 different sugars to 8DMTC, such as NDP-D-glucose, as well as NDP-L-digitoxose, including both L- and D-isomeric forms of some sugars. This is Elloramycin glycosyltransferase ElmGT from Streptomyces olivaceus.